Reading from the N-terminus, the 280-residue chain is uncharacterized protein (280 aa).

Residues 1-51 (MATSLLLRHSSAVFFSQSSFFTKNKSFRSFTSIKMEKGEAENAVKTKKVFV) constitute a chloroplast transit peptide.

Belongs to the NAD(P)-dependent epimerase/dehydratase family.

It is found in the plastid. The protein resides in the chloroplast. It localises to the plastoglobule. This is an uncharacterized protein from Arabidopsis thaliana (Mouse-ear cress).